Consider the following 116-residue polypeptide: Nucleoid-associated protein EUBELI_02017 (116 aa).

Positions 1-12 (MAKRGGFPGGMP) are enriched in gly residues. The segment at 1 to 42 (MAKRGGFPGGMPGNMNNLMKQAQRMQRQMEEQQAELENKEFS) is disordered. The segment covering 13–26 (GNMNNLMKQAQRMQ) has biased composition (low complexity).

It belongs to the YbaB/EbfC family. As to quaternary structure, homodimer.

The protein resides in the cytoplasm. It is found in the nucleoid. In terms of biological role, binds to DNA and alters its conformation. May be involved in regulation of gene expression, nucleoid organization and DNA protection. This Lachnospira eligens (strain ATCC 27750 / DSM 3376 / VPI C15-48 / C15-B4) (Eubacterium eligens) protein is Nucleoid-associated protein EUBELI_02017.